A 557-amino-acid chain; its full sequence is Aspartate--tRNA ligase, cytoplasmic (557 aa).

The segment covering 1 to 12 (MSQDENIVKAVE) has biased composition (basic and acidic residues). The tract at residues 1-74 (MSQDENIVKA…AAAEDTAKDN (74 aa)) is disordered. Ser-2 bears the N-acetylserine mark. The residue at position 14 (Ser-14) is a Phosphoserine. The span at 37-74 (LQKEQEKQRKKEERALQLEAEREAREKKAAAEDTAKDN) shows a compositional bias: basic and acidic residues. Residue Glu-281 coordinates L-aspartate. Position 301 is a phosphoserine (Ser-301). The segment at 303–306 (QFNK) is aspartate. Arg-325 serves as a coordination point for L-aspartate. ATP contacts are provided by residues 325–327 (RAE), 333–335 (RHM), and Glu-478. L-aspartate is bound by residues Ser-481 and Arg-485. Phosphoserine is present on Ser-502. 528 to 531 (GLER) contributes to the ATP binding site. Ser-546 carries the post-translational modification Phosphoserine.

Belongs to the class-II aminoacyl-tRNA synthetase family. Type 2 subfamily. Homodimer.

The protein resides in the cytoplasm. It catalyses the reaction tRNA(Asp) + L-aspartate + ATP = L-aspartyl-tRNA(Asp) + AMP + diphosphate. The protein is Aspartate--tRNA ligase, cytoplasmic (DPS1) of Saccharomyces cerevisiae (strain ATCC 204508 / S288c) (Baker's yeast).